The sequence spans 447 residues: MATDLQVTTNKLSNKETQLTVKVPVEKIQNKVEGRIRQVAKTAKIDGFRKGNVPMSHIRSQYGAGIQQEVINDVIRDTVFEAIKSEDIRAVGMPNIDDVKLEDDFLVYQATVEIFPEIDIQGIDEIEVERHTATVNEEDVDTMIENLQKQREEFVEKKGKADKGNQVTFDFEGSIDGEKFEGGSAEDFKLVIGSNQMIPGFEAGIKGMKAGEEKTIDVTFPEDYQAENLAGKEAQFKINVKLVEKSKLPEMDDAFLELFGVKEGGVEKLKDDVRKNMEREIKNAARSQVKQATFDALLEKNEFDVPNAMLEQEIERQRNMMMQRFSQQFGANADSFDKDMLPNELFEEQALRAARLGIIVARVIDTKGLEVDQARVETFIKEAAENYEDPAEVIEYYTTDKQQRANIESVVLEDQVVDYLIGQGKVTDKEVSYQDLLAAQQQQQQAM.

In terms of domain architecture, PPIase FKBP-type spans 164-249; sequence GNQVTFDFEG…VKLVEKSKLP (86 aa).

It belongs to the FKBP-type PPIase family. Tig subfamily.

The protein resides in the cytoplasm. It catalyses the reaction [protein]-peptidylproline (omega=180) = [protein]-peptidylproline (omega=0). Its function is as follows. Involved in protein export. Acts as a chaperone by maintaining the newly synthesized protein in an open conformation. Functions as a peptidyl-prolyl cis-trans isomerase. The protein is Trigger factor of Psychrobacter arcticus (strain DSM 17307 / VKM B-2377 / 273-4).